The sequence spans 325 residues: Apoptosis-enhancing nuclease (325 aa).

Residues 27–35 carry the Nucleolar localization signal motif; the sequence is RKRHKRRSR. Residues 53–105 form a disordered region; that stretch reads LSMPPEPGSSPLPTPFGAVTATEDASSGKQCPRAGSGGAPCSRRPAPGKASGP. Positions 56–66 are enriched in pro residues; the sequence is PPEPGSSPLPT. Residues 110-266 form the Exonuclease domain; that stretch reads CVAIDCEMVG…EDATTAMELY (157 aa). A Nuclear localization signal motif is present at residues 165–188; sequence RQHMCKAIPFQVAQKEILKLLKGK. The tract at residues 281-325 is disordered; sequence LWTCPEDREPDSSTDMEQYMEDQYWPDDLAHGSRGGAREAQDRRN. The segment covering 308–325 has biased composition (basic and acidic residues); sequence DLAHGSRGGAREAQDRRN.

It is found in the nucleus. The protein resides in the nucleolus. Exonuclease with activity against single- and double-stranded DNA and RNA. Mediates p53-induced apoptosis. When induced by p53 following DNA damage, digests double-stranded DNA to form single-stranded DNA and amplifies DNA damage signals, leading to enhancement of apoptosis. This Pongo abelii (Sumatran orangutan) protein is Apoptosis-enhancing nuclease (AEN).